Reading from the N-terminus, the 105-residue chain is UPF0145 protein (105 aa).

Belongs to the UPF0145 family.

The protein is UPF0145 protein of Enterococcus faecalis (Streptococcus faecalis).